An 822-amino-acid polypeptide reads, in one-letter code: Telomere length regulation protein TEL2 homolog (822 aa).

A disordered region spans residues 442–504; that stretch reads NDDEEEQPDA…ADQEKKKSAP (63 aa). Residues 465 to 477 are compositionally biased toward polar residues; sequence VSSQSVASDPGNG. The span at 480-489 shows a compositional bias: acidic residues; that stretch reads SELDSDDDLT.

This sequence belongs to the TEL2 family.

The protein localises to the cytoplasm. It is found in the membrane. It localises to the nucleus. Its function is as follows. Regulator of the DNA damage response (DDR). Part of the TTT complex that is required to stabilize protein levels of the phosphatidylinositol 3-kinase-related protein kinase (PIKK) family proteins. Promotes assembly, stabilizes and maintains the activity of TORC complexes, which regulate cell growth and survival in response to nutrient and hormonal signals. May be involved in telomere length regulation. The chain is Telomere length regulation protein TEL2 homolog (telo2) from Danio rerio (Zebrafish).